The chain runs to 344 residues: N-acetyl-gamma-glutamyl-phosphate reductase (344 aa).

Cys150 is an active-site residue.

This sequence belongs to the NAGSA dehydrogenase family. Type 1 subfamily.

The protein localises to the cytoplasm. The enzyme catalyses N-acetyl-L-glutamate 5-semialdehyde + phosphate + NADP(+) = N-acetyl-L-glutamyl 5-phosphate + NADPH + H(+). It functions in the pathway amino-acid biosynthesis; L-arginine biosynthesis; N(2)-acetyl-L-ornithine from L-glutamate: step 3/4. Catalyzes the NADPH-dependent reduction of N-acetyl-5-glutamyl phosphate to yield N-acetyl-L-glutamate 5-semialdehyde. The sequence is that of N-acetyl-gamma-glutamyl-phosphate reductase from Pseudomonas syringae pv. syringae (strain B728a).